A 419-amino-acid polypeptide reads, in one-letter code: Multifunctional CCA protein (419 aa).

Residues G8 and R11 each coordinate ATP. 2 residues coordinate CTP: G8 and R11. 2 residues coordinate Mg(2+): D21 and D23. Residues R91, R137, and R140 each contribute to the ATP site. R91, R137, and R140 together coordinate CTP. The 107-residue stretch at 228–334 folds into the HD domain; that stretch reads SFLHTMLVLQ…IKLFNKLDVW (107 aa).

Belongs to the tRNA nucleotidyltransferase/poly(A) polymerase family. Bacterial CCA-adding enzyme type 1 subfamily. Monomer. Can also form homodimers and oligomers. The cofactor is Mg(2+). It depends on Ni(2+) as a cofactor.

It catalyses the reaction a tRNA precursor + 2 CTP + ATP = a tRNA with a 3' CCA end + 3 diphosphate. The enzyme catalyses a tRNA with a 3' CCA end + 2 CTP + ATP = a tRNA with a 3' CCACCA end + 3 diphosphate. Its function is as follows. Catalyzes the addition and repair of the essential 3'-terminal CCA sequence in tRNAs without using a nucleic acid template. Adds these three nucleotides in the order of C, C, and A to the tRNA nucleotide-73, using CTP and ATP as substrates and producing inorganic pyrophosphate. tRNA 3'-terminal CCA addition is required both for tRNA processing and repair. Also involved in tRNA surveillance by mediating tandem CCA addition to generate a CCACCA at the 3' terminus of unstable tRNAs. While stable tRNAs receive only 3'-terminal CCA, unstable tRNAs are marked with CCACCA and rapidly degraded. The sequence is that of Multifunctional CCA protein from Mannheimia succiniciproducens (strain KCTC 0769BP / MBEL55E).